The following is a 239-amino-acid chain: 4-hydroxy-tetrahydrodipicolinate reductase (239 aa).

Residues 9 to 14, 78 to 80, and 104 to 107 contribute to the NAD(+) site; these read GINGKM, GTT, and APNF. The active-site Proton donor/acceptor is the H134. (S)-2,3,4,5-tetrahydrodipicolinate is bound at residue H135. Residue K138 is the Proton donor of the active site. 144–145 lines the (S)-2,3,4,5-tetrahydrodipicolinate pocket; sequence GT.

Belongs to the DapB family.

Its subcellular location is the cytoplasm. The catalysed reaction is (S)-2,3,4,5-tetrahydrodipicolinate + NAD(+) + H2O = (2S,4S)-4-hydroxy-2,3,4,5-tetrahydrodipicolinate + NADH + H(+). It carries out the reaction (S)-2,3,4,5-tetrahydrodipicolinate + NADP(+) + H2O = (2S,4S)-4-hydroxy-2,3,4,5-tetrahydrodipicolinate + NADPH + H(+). It participates in amino-acid biosynthesis; L-lysine biosynthesis via DAP pathway; (S)-tetrahydrodipicolinate from L-aspartate: step 4/4. Its function is as follows. Catalyzes the conversion of 4-hydroxy-tetrahydrodipicolinate (HTPA) to tetrahydrodipicolinate. The chain is 4-hydroxy-tetrahydrodipicolinate reductase from Coxiella burnetii (strain Dugway 5J108-111).